We begin with the raw amino-acid sequence, 356 residues long: Holliday junction branch migration complex subunit RuvB (356 aa).

The interval 4–192 is large ATPase domain (RuvB-L); sequence DDTTDATADE…FGFTAHMEFY (189 aa). ATP is bound by residues Leu31, Arg32, Gly73, Lys76, Thr77, Thr78, 139–141, Arg182, Tyr192, and Arg229; that span reads EDF. Position 77 (Thr77) interacts with Mg(2+). The segment at 193–263 is small ATPAse domain (RuvB-S); that stretch reads EPHELERVIH…IAAAALKVYE (71 aa). Positions 266–356 are head domain (RuvB-H); sequence ARGLDRLDRG…GNGQGDLFGA (91 aa). Positions 302, 321, and 326 each coordinate DNA.

It belongs to the RuvB family. As to quaternary structure, homohexamer. Forms an RuvA(8)-RuvB(12)-Holliday junction (HJ) complex. HJ DNA is sandwiched between 2 RuvA tetramers; dsDNA enters through RuvA and exits via RuvB. An RuvB hexamer assembles on each DNA strand where it exits the tetramer. Each RuvB hexamer is contacted by two RuvA subunits (via domain III) on 2 adjacent RuvB subunits; this complex drives branch migration. In the full resolvosome a probable DNA-RuvA(4)-RuvB(12)-RuvC(2) complex forms which resolves the HJ.

The protein localises to the cytoplasm. It carries out the reaction ATP + H2O = ADP + phosphate + H(+). Its function is as follows. The RuvA-RuvB-RuvC complex processes Holliday junction (HJ) DNA during genetic recombination and DNA repair, while the RuvA-RuvB complex plays an important role in the rescue of blocked DNA replication forks via replication fork reversal (RFR). RuvA specifically binds to HJ cruciform DNA, conferring on it an open structure. The RuvB hexamer acts as an ATP-dependent pump, pulling dsDNA into and through the RuvAB complex. RuvB forms 2 homohexamers on either side of HJ DNA bound by 1 or 2 RuvA tetramers; 4 subunits per hexamer contact DNA at a time. Coordinated motions by a converter formed by DNA-disengaged RuvB subunits stimulates ATP hydrolysis and nucleotide exchange. Immobilization of the converter enables RuvB to convert the ATP-contained energy into a lever motion, pulling 2 nucleotides of DNA out of the RuvA tetramer per ATP hydrolyzed, thus driving DNA branch migration. The RuvB motors rotate together with the DNA substrate, which together with the progressing nucleotide cycle form the mechanistic basis for DNA recombination by continuous HJ branch migration. Branch migration allows RuvC to scan DNA until it finds its consensus sequence, where it cleaves and resolves cruciform DNA. The sequence is that of Holliday junction branch migration complex subunit RuvB from Streptomyces avermitilis (strain ATCC 31267 / DSM 46492 / JCM 5070 / NBRC 14893 / NCIMB 12804 / NRRL 8165 / MA-4680).